Consider the following 239-residue polypeptide: Large ribosomal subunit protein bL25 (239 aa).

A disordered region spans residues 211–239 (KGKKDKEDEEAEKGTSVASPTTATGGTKK). Polar residues predominate over residues 226-239 (SVASPTTATGGTKK).

The protein belongs to the bacterial ribosomal protein bL25 family. CTC subfamily. Part of the 50S ribosomal subunit; part of the 5S rRNA/L5/L18/L25 subcomplex. Contacts the 5S rRNA. Binds to the 5S rRNA independently of L5 and L18.

This is one of the proteins that binds to the 5S RNA in the ribosome where it forms part of the central protuberance. This is Large ribosomal subunit protein bL25 from Endomicrobium trichonymphae.